Reading from the N-terminus, the 267-residue chain is NAD-capped RNA hydrolase NudC (267 aa).

Arg70 contributes to the substrate binding site. 2 residues coordinate Zn(2+): Cys99 and Cys102. Residue Glu112 coordinates substrate. Zn(2+) contacts are provided by Cys117 and Cys122. Tyr127 lines the substrate pocket. Residues 128-257 enclose the Nudix hydrolase domain; sequence PVICPSIIVA…TIARALIEAT (130 aa). The a divalent metal cation site is built by Ala166, Glu182, and Glu186. The Nudix box signature appears at 167-188; sequence GFVEVGESFEQTIHREVFEETG. Residue 200-207 participates in substrate binding; it reads QPWAFPNS. Residue Glu227 coordinates a divalent metal cation. Ala250 contributes to the substrate binding site.

This sequence belongs to the Nudix hydrolase family. NudC subfamily. As to quaternary structure, homodimer. The cofactor is Mg(2+). Requires Mn(2+) as cofactor. Zn(2+) serves as cofactor.

The catalysed reaction is a 5'-end NAD(+)-phospho-ribonucleoside in mRNA + H2O = a 5'-end phospho-adenosine-phospho-ribonucleoside in mRNA + beta-nicotinamide D-ribonucleotide + 2 H(+). It catalyses the reaction NAD(+) + H2O = beta-nicotinamide D-ribonucleotide + AMP + 2 H(+). It carries out the reaction NADH + H2O = reduced beta-nicotinamide D-ribonucleotide + AMP + 2 H(+). Functionally, mRNA decapping enzyme that specifically removes the nicotinamide adenine dinucleotide (NAD) cap from a subset of mRNAs by hydrolyzing the diphosphate linkage to produce nicotinamide mononucleotide (NMN) and 5' monophosphate mRNA. The NAD-cap is present at the 5'-end of some mRNAs and stabilizes RNA against 5'-processing. Has preference for mRNAs with a 5'-end purine. Catalyzes the hydrolysis of a broad range of dinucleotide pyrophosphates. The chain is NAD-capped RNA hydrolase NudC from Mannheimia succiniciproducens (strain KCTC 0769BP / MBEL55E).